The primary structure comprises 160 residues: S-ribosylhomocysteine lyase (160 aa).

Positions 57, 61, and 127 each coordinate Fe cation.

Belongs to the LuxS family. As to quaternary structure, homodimer. It depends on Fe cation as a cofactor.

It carries out the reaction S-(5-deoxy-D-ribos-5-yl)-L-homocysteine = (S)-4,5-dihydroxypentane-2,3-dione + L-homocysteine. Its function is as follows. Involved in the synthesis of autoinducer 2 (AI-2) which is secreted by bacteria and is used to communicate both the cell density and the metabolic potential of the environment. The regulation of gene expression in response to changes in cell density is called quorum sensing. Catalyzes the transformation of S-ribosylhomocysteine (RHC) to homocysteine (HC) and 4,5-dihydroxy-2,3-pentadione (DPD). This is S-ribosylhomocysteine lyase from Streptococcus pyogenes serotype M4 (strain MGAS10750).